Reading from the N-terminus, the 278-residue chain is Undecaprenyl-diphosphatase (278 aa).

Transmembrane regions (helical) follow at residues 3–23, 42–62, 88–108, 112–132, 152–172, 190–210, 225–245, and 253–273; these read YILI…IPIS, VAYS…IIYF, FLVI…LFVI, ILGL…IIIY, IIIV…RSGI, LSFI…VLFS, GLLI…NALL, and VVVL…LSGI.

Belongs to the UppP family.

It localises to the cell membrane. It catalyses the reaction di-trans,octa-cis-undecaprenyl diphosphate + H2O = di-trans,octa-cis-undecaprenyl phosphate + phosphate + H(+). Catalyzes the dephosphorylation of undecaprenyl diphosphate (UPP). This chain is Undecaprenyl-diphosphatase, found in Saccharolobus islandicus (strain M.16.4 / Kamchatka #3) (Sulfolobus islandicus).